A 959-amino-acid polypeptide reads, in one-letter code: Probable LRR receptor-like serine/threonine-protein kinase At5g37450 (959 aa).

An N-terminal signal peptide occupies residues 1–24 (MKEMMGVVGIILVVSSCCLSLLDA). Topologically, residues 25–565 (QEITHPTDVS…SGMSIGVSVG (541 aa)) are extracellular. 4 N-linked (GlcNAc...) asparagine glycosylation sites follow: asparagine 62, asparagine 88, asparagine 102, and asparagine 123. LRR repeat units lie at residues 79–100 (VKEL…LGLL), 101–124 (SNLT…LGNL), 125–148 (THLI…LGSL), 149–172 (SNLL…LANL), 173–198 (KKLK…TLTN), 200–220 (LHFL…LAQM), 221–244 (PSLR…SYGS), 246–268 (PNLV…LSKS), and 269–292 (LVLY…KFSA). Residue asparagine 182 is glycosylated (N-linked (GlcNAc...) asparagine). N-linked (GlcNAc...) asparagine glycosylation is found at asparagine 293, asparagine 311, asparagine 327, asparagine 358, asparagine 369, and asparagine 510. LRR repeat units follow at residues 294–314 (ITTI…NFSG), 315–338 (LPRL…IWEN), and 341–366 (LKAE…LLNP). A helical membrane pass occupies residues 566–586 (IIIGAIAFFLVLSSLALVFFI). Residues 587–959 (KRSKRKRKTR…SGVIPSIAPR (373 aa)) lie on the Cytoplasmic side of the membrane. The Protein kinase domain occupies 631–906 (FSDLSQIGRG…RELENIYGLI (276 aa)). ATP contacts are provided by residues 637–645 (IGRGGYGKV) and lysine 659. Aspartate 755 functions as the Proton acceptor in the catalytic mechanism.

The protein belongs to the protein kinase superfamily. Ser/Thr protein kinase family.

It is found in the membrane. The enzyme catalyses L-seryl-[protein] + ATP = O-phospho-L-seryl-[protein] + ADP + H(+). It catalyses the reaction L-threonyl-[protein] + ATP = O-phospho-L-threonyl-[protein] + ADP + H(+). The protein is Probable LRR receptor-like serine/threonine-protein kinase At5g37450 of Arabidopsis thaliana (Mouse-ear cress).